A 750-amino-acid polypeptide reads, in one-letter code: Olfactomedin-like protein 2B (750 aa).

Positions 1–22 (MAKPRLLVLYFALIVVPAWVSS) are cleaved as a signal peptide. 2 coiled-coil regions span residues 40–68 (AEDETLQNEADNQENVLSQLLGDYDKVKA) and 179–213 (KLEEEVSKNLTKENEQIKEDMEEIRTEMNKRGKEN). N-linked (GlcNAc...) asparagine glycans are attached at residues asparagine 187 and asparagine 213. 2 disordered regions span residues 346–437 (TRRP…PPAV) and 452–484 (VPPTTVRTDSLGKDAPAGWGTTPASPTLSPEEE). 2 stretches are compositionally biased toward polar residues: residues 354–384 (QGHSTAVTSDLNARTAPWSSALPQPSTSDPS) and 393–413 (PTLQTTSVSPDPTRESVLQPS). Low complexity predominate over residues 416–430 (VPATTVAHTATQQPA). The 258-residue stretch at 493-750 (RCKDTLSTIT…QVTYHVIFAY (258 aa)) folds into the Olfactomedin-like domain. Cysteine 494 and cysteine 680 are oxidised to a cystine. Asparagine 695 is a glycosylation site (N-linked (GlcNAc...) asparagine).

In terms of assembly, homodimer. Binds to heparin and chondroitin sulfate E. Post-translationally, O-glycosylated and N-glycosylated.

It localises to the secreted. The polypeptide is Olfactomedin-like protein 2B (OLFML2B) (Homo sapiens (Human)).